The primary structure comprises 488 residues: Glutamyl-tRNA(Gln) amidotransferase subunit A (488 aa).

Active-site charge relay system residues include Lys-79 and Ser-159. Ser-183 (acyl-ester intermediate) is an active-site residue.

The protein belongs to the amidase family. GatA subfamily. As to quaternary structure, heterotrimer of A, B and C subunits.

It carries out the reaction L-glutamyl-tRNA(Gln) + L-glutamine + ATP + H2O = L-glutaminyl-tRNA(Gln) + L-glutamate + ADP + phosphate + H(+). Functionally, allows the formation of correctly charged Gln-tRNA(Gln) through the transamidation of misacylated Glu-tRNA(Gln) in organisms which lack glutaminyl-tRNA synthetase. The reaction takes place in the presence of glutamine and ATP through an activated gamma-phospho-Glu-tRNA(Gln). The polypeptide is Glutamyl-tRNA(Gln) amidotransferase subunit A (Wolbachia pipientis subsp. Culex pipiens (strain wPip)).